A 99-amino-acid chain; its full sequence is Transposase InsE for insertion sequence IS3A (99 aa).

The segment at 1 to 21 (MTKTVSTSKKPRKQHSPEFRS) is disordered.

It belongs to the transposase 8 family.

Involved in the transposition of the insertion sequence IS3. This chain is Transposase InsE for insertion sequence IS3A (insE1), found in Escherichia coli (strain K12).